The primary structure comprises 650 residues: ATP-binding cassette sub-family G member 3 (650 aa).

The Cytoplasmic segment spans residues 1-387 (MASNNDPTVI…KNFKGFPWVT (387 aa)). Positions 37 to 279 (LSFHNISYQE…FRSAGYNYES (243 aa)) constitute an ABC transporter domain. An ABC transmembrane type-2 domain is found at 381 to 644 (KGFPWVTVIQ…TITYVQLLQV (264 aa)). The helical transmembrane segment at 388 to 408 (VIQAIITVILATAVGTAFRVL) threads the bilayer. The Extracellular segment spans residues 409–420 (KNDCIEVQMRAG). The chain crosses the membrane as a helical span at residues 421–441 (LLYLLTIFQCITSVSAGELFV). The Cytoplasmic portion of the chain corresponds to 442-469 (IDRVRFLHEHTSGYYRVSSYFFGKLLAE). Residues 470–490 (LIPRRLLPSTVFSLITYVIAG) form a helical membrane-spanning segment. At 491–498 (VKMSMKCF) the chain is on the extracellular side. Residues 499-519 (FTMICTIMVLAYSASSLPLSI) traverse the membrane as a helical segment. The Cytoplasmic segment spans residues 520-527 (GAGENAVA). Residues 528 to 548 (VPTLLVTIYFVFMLFFSGLSL) form a helical membrane-spanning segment. Topologically, residues 549–623 (YSGSFLPKLS…LSSWGFWENH (75 aa)) are extracellular. Residues 624–644 (LALVCTMIILLTITYVQLLQV) traverse the membrane as a helical segment. Over 645–648 (KNIR) the chain is Cytoplasmic.

The protein belongs to the ABC transporter superfamily. ABCG family. Eye pigment precursor importer (TC 3.A.1.204) subfamily. May dimerize with another subunit to form a functional transporter. As to expression, highest levels of expression in thymus and spleen. Detected in lung and small intestine.

It is found in the membrane. The protein is ATP-binding cassette sub-family G member 3 (Abcg3) of Mus musculus (Mouse).